Here is a 322-residue protein sequence, read N- to C-terminus: Pilin gene-inverting protein (322 aa).

Functionally, may be the site-specific invertase required for pilin gene inversion. Moraxella can express either a Q or I pilin; the inversion of 2 kb of DNA determines which pilin is expressed. This chain is Pilin gene-inverting protein (piv), found in Moraxella bovis.